The primary structure comprises 353 residues: Methionine import ATP-binding protein MetN (353 aa).

The region spanning 6-249 (LKNVDVDFPQ…PKQELTKKFV (244 aa)) is the ABC transporter domain. 41 to 48 (GFSGAGKS) serves as a coordination point for ATP.

This sequence belongs to the ABC transporter superfamily. Methionine importer (TC 3.A.1.24) family. As to quaternary structure, the complex is composed of two ATP-binding proteins (MetN), two transmembrane proteins (MetI) and a solute-binding protein (MetQ).

The protein resides in the cell membrane. The catalysed reaction is L-methionine(out) + ATP + H2O = L-methionine(in) + ADP + phosphate + H(+). It catalyses the reaction D-methionine(out) + ATP + H2O = D-methionine(in) + ADP + phosphate + H(+). Its function is as follows. Part of the ABC transporter complex MetNIQ involved in methionine import. Responsible for energy coupling to the transport system. The sequence is that of Methionine import ATP-binding protein MetN from Lactobacillus acidophilus (strain ATCC 700396 / NCK56 / N2 / NCFM).